The sequence spans 291 residues: 33 kDa chaperonin (291 aa).

Cystine bridges form between cysteine 235–cysteine 237 and cysteine 268–cysteine 271.

This sequence belongs to the HSP33 family. Post-translationally, under oxidizing conditions two disulfide bonds are formed involving the reactive cysteines. Under reducing conditions zinc is bound to the reactive cysteines and the protein is inactive.

It is found in the cytoplasm. In terms of biological role, redox regulated molecular chaperone. Protects both thermally unfolding and oxidatively damaged proteins from irreversible aggregation. Plays an important role in the bacterial defense system toward oxidative stress. This is 33 kDa chaperonin from Streptococcus agalactiae serotype Ia (strain ATCC 27591 / A909 / CDC SS700).